The chain runs to 672 residues: Peptidoglycan D,D-transpeptidase MrdA (672 aa).

The helical transmembrane segment at I21 to Y41 threads the bilayer. The active-site Acyl-ester intermediate is S326. Positions 350, 365, 371, and 384 each coordinate Zn(2+). Residues A616–E672 are disordered. The span at S640–E672 shows a compositional bias: low complexity.

It belongs to the transpeptidase family. MrdA subfamily. Monomer. Zn(2+) is required as a cofactor.

It is found in the cell inner membrane. The enzyme catalyses Preferential cleavage: (Ac)2-L-Lys-D-Ala-|-D-Ala. Also transpeptidation of peptidyl-alanyl moieties that are N-acyl substituents of D-alanine.. It functions in the pathway cell wall biogenesis; peptidoglycan biosynthesis. Its activity is regulated as follows. Inhibited by the beta-lactams sulbactam and piperacillin-tazobactam. In terms of biological role, catalyzes cross-linking of the peptidoglycan cell wall. Involved in the determination of the rod shape of the cell. This Acinetobacter baumannii (strain ATCC 19606 / DSM 30007 / JCM 6841 / CCUG 19606 / CIP 70.34 / NBRC 109757 / NCIMB 12457 / NCTC 12156 / 81) protein is Peptidoglycan D,D-transpeptidase MrdA.